The sequence spans 558 residues: Dihydroxy-acid dehydratase (558 aa).

Aspartate 78 lines the Mg(2+) pocket. Cysteine 119 contacts [2Fe-2S] cluster. Aspartate 120 and lysine 121 together coordinate Mg(2+). N6-carboxylysine is present on lysine 121. Position 192 (cysteine 192) interacts with [2Fe-2S] cluster. Glutamate 446 provides a ligand contact to Mg(2+). Serine 472 serves as the catalytic Proton acceptor.

Belongs to the IlvD/Edd family. Homodimer. [2Fe-2S] cluster serves as cofactor. Requires Mg(2+) as cofactor.

It carries out the reaction (2R)-2,3-dihydroxy-3-methylbutanoate = 3-methyl-2-oxobutanoate + H2O. The enzyme catalyses (2R,3R)-2,3-dihydroxy-3-methylpentanoate = (S)-3-methyl-2-oxopentanoate + H2O. The protein operates within amino-acid biosynthesis; L-isoleucine biosynthesis; L-isoleucine from 2-oxobutanoate: step 3/4. Its pathway is amino-acid biosynthesis; L-valine biosynthesis; L-valine from pyruvate: step 3/4. Functions in the biosynthesis of branched-chain amino acids. Catalyzes the dehydration of (2R,3R)-2,3-dihydroxy-3-methylpentanoate (2,3-dihydroxy-3-methylvalerate) into 2-oxo-3-methylpentanoate (2-oxo-3-methylvalerate) and of (2R)-2,3-dihydroxy-3-methylbutanoate (2,3-dihydroxyisovalerate) into 2-oxo-3-methylbutanoate (2-oxoisovalerate), the penultimate precursor to L-isoleucine and L-valine, respectively. In Campylobacter jejuni subsp. jejuni serotype O:2 (strain ATCC 700819 / NCTC 11168), this protein is Dihydroxy-acid dehydratase.